Here is a 95-residue protein sequence, read N- to C-terminus: Aspartyl/glutamyl-tRNA(Asn/Gln) amidotransferase subunit C (95 aa).

Belongs to the GatC family. As to quaternary structure, heterotrimer of A, B and C subunits.

The enzyme catalyses L-glutamyl-tRNA(Gln) + L-glutamine + ATP + H2O = L-glutaminyl-tRNA(Gln) + L-glutamate + ADP + phosphate + H(+). It carries out the reaction L-aspartyl-tRNA(Asn) + L-glutamine + ATP + H2O = L-asparaginyl-tRNA(Asn) + L-glutamate + ADP + phosphate + 2 H(+). Functionally, allows the formation of correctly charged Asn-tRNA(Asn) or Gln-tRNA(Gln) through the transamidation of misacylated Asp-tRNA(Asn) or Glu-tRNA(Gln) in organisms which lack either or both of asparaginyl-tRNA or glutaminyl-tRNA synthetases. The reaction takes place in the presence of glutamine and ATP through an activated phospho-Asp-tRNA(Asn) or phospho-Glu-tRNA(Gln). In Syntrophus aciditrophicus (strain SB), this protein is Aspartyl/glutamyl-tRNA(Asn/Gln) amidotransferase subunit C.